Here is a 345-residue protein sequence, read N- to C-terminus: Mitochondrial metalloendopeptidase OMA1 (345 aa).

At 1–67 the chain is on the mitochondrial matrix side; sequence MLRNIIRFKG…ILLDKSSRKY (67 aa). A helical transmembrane segment spans residues 68-88; that stretch reads LALLFGGCSLFYYTHLDKAPV. Topologically, residues 89–345 are mitochondrial intermembrane; the sequence is SDRSRFIWVS…GNYYKSFFSM (257 aa). A Zn(2+)-binding site is contributed by histidine 203. Residue glutamate 204 is part of the active site. The Zn(2+) site is built by histidine 207 and glutamate 257. The cysteines at positions 272 and 332 are disulfide-linked. A required for protease activation region spans residues 314–345; sequence ENMSKWLPKANEIYEQSDCSSMGNYYKSFFSM.

This sequence belongs to the peptidase M48 family. In terms of assembly, homooligomer. Zn(2+) is required as a cofactor. Post-translationally, forms a redox-dependent disulfide bond, which plays a structural role and regulates its conformational stability and activity.

The protein resides in the mitochondrion inner membrane. Protease activity is induced in response to various mitochondrial stress, such as changes in membrane potential, oxidative stress or chronic hyperpolarization, and depends on its C-terminal region. Functionally, protease that is part of the quality control system in the inner membrane of mitochondria. Activated in response to various mitochondrial stress, leading to the proteolytic cleavage of target proteins, such as OXA1 and COX1. Cleaves and thereby promotes the turnover of mistranslated or misfolded membrane proteins. Cleaves the misfolded multi-pass membrane protein OXA1. Involved in quality control of cytochrome oxidase assembly: mediates the cleavage of COX1 in cells lacking COA2. Required for the stability of the respiratory supercomplexes. Required for TOR signaling. The sequence is that of Mitochondrial metalloendopeptidase OMA1 from Saccharomyces cerevisiae (strain ATCC 204508 / S288c) (Baker's yeast).